The sequence spans 494 residues: Succinoglycan biosynthesis transport protein ExoT (494 aa).

13 helical membrane-spanning segments follow: residues 16-36 (WSVL…PILA), 44-64 (FGAV…GGAG), 82-102 (SVFW…FVFA), 105-125 (LATL…SLLI), 157-177 (LGAV…SLLA), 215-235 (FGMM…MVVI), 253-273 (FASI…FPTF), 297-317 (LLAP…LVLF), 321-341 (WAYA…LTPC), 343-363 (TFIP…WALI), 384-404 (AMIW…WVVF), 421-441 (PMIA…HFGA), and 447-467 (VLQL…LILL).

It belongs to the polysaccharide synthase family.

It is found in the cell membrane. It functions in the pathway glycan metabolism; exopolysaccharide biosynthesis. In Rhizobium meliloti (strain 1021) (Ensifer meliloti), this protein is Succinoglycan biosynthesis transport protein ExoT (exoT).